Consider the following 953-residue polypeptide: Serine/threonine-protein kinase ppk30 (953 aa).

Residues 57–326 (VIIQRYLSEG…IYQTLKEIME (270 aa)) enclose the Protein kinase domain. Residues 63-71 (LSEGGFSHV) and lysine 85 each bind ATP. The active-site Proton acceptor is aspartate 187. Disordered stretches follow at residues 343–402 (ASTY…PSVS), 427–451 (SPIP…RRAD), 538–606 (RFLP…NRMN), 641–669 (RKEP…NKDV), 748–791 (STSQ…RPIG), and 864–953 (RKSC…ESLE). Composition is skewed to polar residues over residues 355–369 (RTPS…SRPA), 378–402 (TVQT…PSVS), and 433–444 (KSYSATIQTPRS). Residues 547-557 (PSEFSSSVGSK) are compositionally biased toward low complexity. Positions 558-575 (QNLSMDIPSVQNVSTKQK) are enriched in polar residues. Residues 656–669 (LKKDQSSEVANKDV) show a composition bias toward basic and acidic residues. Residues 748-766 (STSQVSHTQRLQQSISTSL) are compositionally biased toward polar residues. Basic and acidic residues-rich tracts occupy residues 767–778 (ERVKSNTKKESN), 865–884 (KSCE…DLER), and 937–953 (PHIE…ESLE). Serine 872 and serine 875 each carry phosphoserine.

Belongs to the protein kinase superfamily. Ser/Thr protein kinase family.

The protein resides in the cytoplasm. The catalysed reaction is L-seryl-[protein] + ATP = O-phospho-L-seryl-[protein] + ADP + H(+). It catalyses the reaction L-threonyl-[protein] + ATP = O-phospho-L-threonyl-[protein] + ADP + H(+). This Schizosaccharomyces pombe (strain 972 / ATCC 24843) (Fission yeast) protein is Serine/threonine-protein kinase ppk30 (ppk30).